The chain runs to 660 residues: DNA mismatch repair protein MutL (660 aa).

It belongs to the DNA mismatch repair MutL/HexB family.

Functionally, this protein is involved in the repair of mismatches in DNA. It is required for dam-dependent methyl-directed DNA mismatch repair. May act as a 'molecular matchmaker', a protein that promotes the formation of a stable complex between two or more DNA-binding proteins in an ATP-dependent manner without itself being part of a final effector complex. The protein is DNA mismatch repair protein MutL of Solibacter usitatus (strain Ellin6076).